A 156-amino-acid polypeptide reads, in one-letter code: ATP synthase subunit b (156 aa).

A helical transmembrane segment spans residues 12–32; it reads VAFFIFVLFCMKFVWPPVIAA.

The protein belongs to the ATPase B chain family. In terms of assembly, F-type ATPases have 2 components, F(1) - the catalytic core - and F(0) - the membrane proton channel. F(1) has five subunits: alpha(3), beta(3), gamma(1), delta(1), epsilon(1). F(0) has three main subunits: a(1), b(2) and c(10-14). The alpha and beta chains form an alternating ring which encloses part of the gamma chain. F(1) is attached to F(0) by a central stalk formed by the gamma and epsilon chains, while a peripheral stalk is formed by the delta and b chains.

Its subcellular location is the cell inner membrane. In terms of biological role, f(1)F(0) ATP synthase produces ATP from ADP in the presence of a proton or sodium gradient. F-type ATPases consist of two structural domains, F(1) containing the extramembraneous catalytic core and F(0) containing the membrane proton channel, linked together by a central stalk and a peripheral stalk. During catalysis, ATP synthesis in the catalytic domain of F(1) is coupled via a rotary mechanism of the central stalk subunits to proton translocation. Its function is as follows. Component of the F(0) channel, it forms part of the peripheral stalk, linking F(1) to F(0). This is ATP synthase subunit b from Pseudomonas syringae pv. syringae (strain B728a).